The following is a 1754-amino-acid chain: Intraflagellar transport protein 172 homolog (1754 aa).

WD repeat units lie at residues 14–53 (EQIQ…RDKF), 64–103 (KNSY…NDKK), 110–149 (PQAS…QSLY), 151–190 (GDSI…EPLG), 194–232 (QHPV…RTFD), 283–322 (ACLY…TVWQ), and 519–557 (TLLS…EHVT). TPR repeat units lie at residues 623-656 (KAMW…SKAY), 690-723 (GSDL…DEAV), 748-781 (SEQQ…ARAA), 807-840 (SELY…ARAL), 852-885 (TALE…QKAL), 1041-1074 (RGKL…EDGY), 1140-1166 (DEVH…FLKA), 1167-1199 (NKPR…AVGE), 1211-1250 (TSNY…AEEH), 1282-1315 (SRSY…NAED), and 1698-1733 (FPVR…SPGS).

This sequence belongs to the IFT172 family.

The protein resides in the cell projection. It localises to the cilium. In terms of biological role, required for the maintenance and formation of cilia. This chain is Intraflagellar transport protein 172 homolog, found in Drosophila melanogaster (Fruit fly).